The following is a 76-amino-acid chain: Acyl carrier protein (76 aa).

A Carrier domain is found at 1 to 76 (MSVEEKVKKI…DAIDYVSNKQ (76 aa)). The residue at position 36 (serine 36) is an O-(pantetheine 4'-phosphoryl)serine.

The protein belongs to the acyl carrier protein (ACP) family. In terms of processing, 4'-phosphopantetheine is transferred from CoA to a specific serine of apo-ACP by AcpS. This modification is essential for activity because fatty acids are bound in thioester linkage to the sulfhydryl of the prosthetic group.

It is found in the cytoplasm. The protein operates within lipid metabolism; fatty acid biosynthesis. Functionally, carrier of the growing fatty acid chain in fatty acid biosynthesis. The sequence is that of Acyl carrier protein from Nitratidesulfovibrio vulgaris (strain ATCC 29579 / DSM 644 / CCUG 34227 / NCIMB 8303 / VKM B-1760 / Hildenborough) (Desulfovibrio vulgaris).